Here is a 431-residue protein sequence, read N- to C-terminus: Glutamyl-tRNA(Gln) amidotransferase subunit A (431 aa).

Active-site charge relay system residues include Lys55 and Ser130. The active-site Acyl-ester intermediate is Ser154.

This sequence belongs to the amidase family. GatA subfamily. Heterotrimer of A, B and C subunits.

It carries out the reaction L-glutamyl-tRNA(Gln) + L-glutamine + ATP + H2O = L-glutaminyl-tRNA(Gln) + L-glutamate + ADP + phosphate + H(+). In terms of biological role, allows the formation of correctly charged Gln-tRNA(Gln) through the transamidation of misacylated Glu-tRNA(Gln) in organisms which lack glutaminyl-tRNA synthetase. The reaction takes place in the presence of glutamine and ATP through an activated gamma-phospho-Glu-tRNA(Gln). In Methanococcus maripaludis (strain C5 / ATCC BAA-1333), this protein is Glutamyl-tRNA(Gln) amidotransferase subunit A.